A 323-amino-acid chain; its full sequence is tRNA U34 carboxymethyltransferase (323 aa).

Carboxy-S-adenosyl-L-methionine contacts are provided by residues lysine 91, tryptophan 105, lysine 110, glycine 130, 152–154 (DPT), 181–182 (IE), methionine 196, tyrosine 200, and arginine 315.

This sequence belongs to the class I-like SAM-binding methyltransferase superfamily. CmoB family. As to quaternary structure, homotetramer.

It carries out the reaction carboxy-S-adenosyl-L-methionine + 5-hydroxyuridine(34) in tRNA = 5-carboxymethoxyuridine(34) in tRNA + S-adenosyl-L-homocysteine + H(+). Functionally, catalyzes carboxymethyl transfer from carboxy-S-adenosyl-L-methionine (Cx-SAM) to 5-hydroxyuridine (ho5U) to form 5-carboxymethoxyuridine (cmo5U) at position 34 in tRNAs. The chain is tRNA U34 carboxymethyltransferase from Salmonella gallinarum (strain 287/91 / NCTC 13346).